We begin with the raw amino-acid sequence, 558 residues long: Ankyrin repeat protein OPG189 (558 aa).

ANK repeat units follow at residues 65–95 (YGEN…NINK), 169–205 (YGCT…DVDK), 209–239 (HGNT…NIDS), 243–272 (NGYT…NVNT), 276–304 (FGTT…ELEI), 339–368 (YNET…DFET), and 372–401 (SGCT…SLKI).

The protein belongs to the orthopoxvirus OPG189 protein family.

Contributes to viral release without involving rearrangement of host actin. The polypeptide is Ankyrin repeat protein OPG189 (OPG189) (Homo sapiens (Human)).